We begin with the raw amino-acid sequence, 79 residues long: Putative defensin-like protein 274 (79 aa).

An N-terminal signal peptide occupies residues 1-23 (MASSRFQLVALLVVFSLVISITA). 4 disulfide bridges follow: Cys35-Cys76, Cys41-Cys64, Cys47-Cys74, and Cys51-Cys75.

Belongs to the DEFL family.

The protein localises to the secreted. The chain is Putative defensin-like protein 274 from Arabidopsis thaliana (Mouse-ear cress).